We begin with the raw amino-acid sequence, 957 residues long: SH3 domain-binding protein 4-A (957 aa).

The SH3 1 domain maps to 54–113; the sequence is ENVKEVVAIKDYCPNNFTTLKFSKGEHLYVLDASGGDWWYAHNSTEMGYIPSSYVQPLNY. The ZU5 domain maps to 312-449; it reads TSIVCRLDSS…LEPVMYVVMV (138 aa). Residues 649–719 enclose the SH3 2 domain; sequence TSLKYGKLLK…HAKNVLVVGK (71 aa).

In terms of assembly, homodimer or homooligomer.

The protein resides in the membrane. It localises to the clathrin-coated pit. The protein localises to the cytoplasmic vesicle. Its subcellular location is the clathrin-coated vesicle. It is found in the nucleus. In terms of biological role, possible role in regulating endocytosis of the transferrin receptor at the plasma membrane. Alternatively, may function as a negative regulator of the amino acid-induced TOR signaling by inhibiting the formation of active Rag GTPase complexes. Preferentially binds inactive Rag GTPase complexes and prevents their interaction with the mTORC1 complex inhibiting its relocalization to lysosomes and its activation. Thereby, may indirectly regulate cell growth, proliferation and autophagy. This Xenopus laevis (African clawed frog) protein is SH3 domain-binding protein 4-A (sh3bp4-a).